A 522-amino-acid chain; its full sequence is Ribonuclease Y (522 aa).

The helical transmembrane segment at 2–22 (WVEILVGSSAAIISGAAGYLL) threads the bilayer. Residues 212-278 (LINTVSIPSE…TKVIELLVED (67 aa)) form the KH domain. Positions 338-431 (ALGHSLEVAH…VCAADTLSAA (94 aa)) constitute an HD domain.

It belongs to the RNase Y family.

It is found in the cell membrane. Functionally, endoribonuclease that initiates mRNA decay. The chain is Ribonuclease Y from Nitratiruptor sp. (strain SB155-2).